A 75-amino-acid polypeptide reads, in one-letter code: U6-lycotoxin-Ls1d (75 aa).

Residues 1–21 (MKLLLFTALVLVVISLVEVEA) form the signal peptide. The propeptide occupies 22-25 (ENER).

This sequence belongs to the neurotoxin 19 (CSTX) family. 06 (U6-Lctx) subfamily. In terms of processing, contains 4 disulfide bonds. As to expression, expressed by the venom gland.

It is found in the secreted. The chain is U6-lycotoxin-Ls1d from Lycosa singoriensis (Wolf spider).